The sequence spans 551 residues: Protein GPR107 (551 aa).

The N-terminal stretch at 1–33 is a signal peptide; it reads MAVRVPLGCTGSFCPRLLPLLALLELLVDPSLG. Topologically, residues 34-262 are extracellular; it reads RVHHLALKDD…YLSAGEIPLP (229 aa). N-linked (GlcNAc...) asparagine glycosylation is present at asparagine 64. Residues 127 to 183 form a disordered region; that stretch reads GVKVRSPPEAGKQLPEIVFSKDEKVPSRSQEPAVSSNPKDSKVQRTPDGSKAQRSTV. Polar residues predominate over residues 153–164; that stretch reads SRSQEPAVSSNP. N-linked (GlcNAc...) asparagine glycosylation is present at asparagine 209. Residues 263 to 283 traverse the membrane as a helical segment; the sequence is KLYVSMALLFFLSGTVWIHIL. Residues 284-292 lie on the Cytoplasmic side of the membrane; it reads RKRRNDVFK. A helical transmembrane segment spans residues 293–313; it reads IHWLMAALPFTKSLSLVFHAI. The Extracellular segment spans residues 314-336; sequence DYHYISSQGFPIEGWAVVYYITH. A helical transmembrane segment spans residues 337–357; it reads LLKGALLFITIALIGTGWAFI. The Cytoplasmic portion of the chain corresponds to 358–367; it reads KHILSDKDKK. A helical membrane pass occupies residues 368 to 388; the sequence is IFMIVIPLQVLANVAYIIIES. The Extracellular segment spans residues 389–401; the sequence is TEEGTTEYGLWKD. The helical transmembrane segment at 402 to 422 threads the bilayer; sequence SLFLVDLLCCGAILFPVVWSI. The Cytoplasmic segment spans residues 423–443; sequence RHLQEASATDGKAAINLAKLK. A helical transmembrane segment spans residues 444 to 466; the sequence is LFRHYYVLIVCYIYFTRIIAFLL. Topologically, residues 467 to 475 are extracellular; it reads KFAVPFQWK. Residues 476–495 traverse the membrane as a helical segment; the sequence is WLYQLLDETATLVFFVLTGY. The Cytoplasmic segment spans residues 496-551; the sequence is KFRPASDNPYLQLSQEEDDLEMESVVTTSGVMENMKKVKKVSNGAVEPQGSWEGTA.

This sequence belongs to the LU7TM family. In terms of processing, cleaved by FURIN to yield two fragments that remain associated via a disulfide bond. In terms of tissue distribution, widely expressed. Not detected in the duodenum, nor in the exocrine pancreas.

It is found in the cell membrane. It localises to the golgi apparatus. The protein resides in the trans-Golgi network membrane. Has been proposed to act as a receptor for neuronostatin, a peptide derived from the somatostatin/SST precursor. Involved in blood sugar regulation through the induction of glucagon in response to low glucose. This is Protein GPR107 (Gpr107) from Rattus norvegicus (Rat).